Reading from the N-terminus, the 272-residue chain is 1,4-dihydroxy-2-naphthoyl-CoA synthase (272 aa).

Residues arginine 33, 72 to 76 (SGGDQ), tyrosine 84, 116 to 120 (YAIGG), threonine 142, serine 148, tyrosine 245, and lysine 260 each bind substrate. 141–143 (QTG) lines the hydrogencarbonate pocket. Basic and acidic residues predominate over residues 253-264 (GRDAFKEKRDPD). The tract at residues 253–272 (GRDAFKEKRDPDFDQFPKFP) is disordered.

This sequence belongs to the enoyl-CoA hydratase/isomerase family. MenB subfamily. It depends on hydrogencarbonate as a cofactor.

It carries out the reaction 2-succinylbenzoyl-CoA + H(+) = 1,4-dihydroxy-2-naphthoyl-CoA + H2O. The protein operates within quinol/quinone metabolism; 1,4-dihydroxy-2-naphthoate biosynthesis; 1,4-dihydroxy-2-naphthoate from chorismate: step 6/7. It participates in quinol/quinone metabolism; menaquinone biosynthesis. Converts o-succinylbenzoyl-CoA (OSB-CoA) to 1,4-dihydroxy-2-naphthoyl-CoA (DHNA-CoA). This chain is 1,4-dihydroxy-2-naphthoyl-CoA synthase, found in Staphylococcus haemolyticus (strain JCSC1435).